The chain runs to 449 residues: Neuraminidase (449 aa).

The Intravirion segment spans residues 1-6 (MNPNQK). The chain crosses the membrane as a helical span at residues 7–29 (IITIGSVSLTIATVCFLMQIAIL). The involved in apical transport and lipid raft association stretch occupies residues 11 to 33 (GSVSLTIATVCFLMQIAILATNV). The Virion surface portion of the chain corresponds to 30–449 (ATNVTLHFRQ…DGANINFMPL (420 aa)). Asn32, Asn48, and Asn66 each carry an N-linked (GlcNAc...) asparagine; by host glycan. The hypervariable stalk region stretch occupies residues 36–68 (HFRQNERSIPAYNQTTPCKPIIIERNIKYRNWS). A head of neuraminidase region spans residues 71–449 (QCQITGFAPF…DGANINFMPL (379 aa)). Intrachain disulfides connect Cys72–Cys397, Cys104–Cys109, Cys163–Cys210, Cys212–Cys217, Cys258–Cys271, Cys260–Cys269, Cys298–Cys317, and Cys401–Cys427. Arg98 serves as a coordination point for substrate. N-linked (GlcNAc...) asparagine; by host glycans are attached at residues Asn123 and Asn126. Catalysis depends on Asp131, which acts as the Proton donor/acceptor. Residue Arg132 participates in substrate binding. N-linked (GlcNAc...) asparagine; by host glycans are attached at residues Asn180 and Asn214. 256–257 (EE) contacts substrate. Position 272 (Arg272) interacts with substrate. Ca(2+)-binding residues include Asp273, Gly277, and Asp304. Positions 305 to 330 (TPRNDDSSSSSNCRDPNNERGNPGVK) are disordered. Arg351 contributes to the substrate binding site. Asn382 carries an N-linked (GlcNAc...) asparagine; by host glycan. Catalysis depends on Tyr386, which acts as the Nucleophile.

Belongs to the glycosyl hydrolase 34 family. As to quaternary structure, homotetramer. Ca(2+) serves as cofactor. N-glycosylated.

It is found in the virion membrane. It localises to the host apical cell membrane. It catalyses the reaction Hydrolysis of alpha-(2-&gt;3)-, alpha-(2-&gt;6)-, alpha-(2-&gt;8)- glycosidic linkages of terminal sialic acid residues in oligosaccharides, glycoproteins, glycolipids, colominic acid and synthetic substrates.. With respect to regulation, inhibited by the neuraminidase inhibitors zanamivir (Relenza) and oseltamivir (Tamiflu). These drugs interfere with the release of progeny virus from infected cells and are effective against all influenza strains. Resistance to neuraminidase inhibitors is quite rare. Catalyzes the removal of terminal sialic acid residues from viral and cellular glycoconjugates. Cleaves off the terminal sialic acids on the glycosylated HA during virus budding to facilitate virus release. Additionally helps virus spread through the circulation by further removing sialic acids from the cell surface. These cleavages prevent self-aggregation and ensure the efficient spread of the progeny virus from cell to cell. Otherwise, infection would be limited to one round of replication. Described as a receptor-destroying enzyme because it cleaves a terminal sialic acid from the cellular receptors. May facilitate viral invasion of the upper airways by cleaving the sialic acid moieties on the mucin of the airway epithelial cells. Likely to plays a role in the budding process through its association with lipid rafts during intracellular transport. May additionally display a raft-association independent effect on budding. Plays a role in the determination of host range restriction on replication and virulence. Sialidase activity in late endosome/lysosome traffic seems to enhance virus replication. This is Neuraminidase from Aves.